The primary structure comprises 975 residues: Cation-chloride cotransporter 1 (975 aa).

2 disordered regions span residues 1 to 29 (MDSGDIEEAGGNGEEEFRSGPRLGGSKYR) and 104 to 124 (EQIQAPSSPRDGEDISITQGH). Residues 1–132 (MDSGDIEEAG…GHPKPPALKM (132 aa)) lie on the Cytoplasmic side of the membrane. The helical transmembrane segment at 133–153 (GTMMGVFVPCLQNILGIIYYI) threads the bilayer. The Extracellular segment spans residues 154-167 (RFTWIVGMAGIGQG). The chain crosses the membrane as a helical span at residues 168-188 (LVLVFLCGLCTFLTTISLSAI). The Cytoplasmic portion of the chain corresponds to 189-214 (ATNGAMKGGGPYYLIGRALGPEVGIS). The chain crosses the membrane as a helical span at residues 215–235 (IGLCFFLGNAVAGALYVLGAV). Over 236-273 (ETFLKAFPAAGIFRETITKVNGTAVSESIQSPNSHDLQ) the chain is Extracellular. Asn256 is a glycosylation site (N-linked (GlcNAc...) asparagine). The helical transmembrane segment at 274-294 (VYGIVVTILLCFIVFGGVKMI) threads the bilayer. Residues 295-296 (NR) are Cytoplasmic-facing. A helical membrane pass occupies residues 297 to 317 (VAPAFLVPVLLSIFCIFIGIF). Residues 318–359 (LAKTDDPDNGITGLRLKSFKDNWGSAYQMTNDAGIPDPTGGT) lie on the Extracellular side of the membrane. A helical transmembrane segment spans residues 360 to 380 (YWSFNELVGLFFPAVTGIMAG). Residues 381-398 (SNRSASLKDTQKSIPVGT) lie on the Cytoplasmic side of the membrane. A helical membrane pass occupies residues 399–419 (LAATLTTTSLYLISVLFFGAV). Over 420–434 (ATRDKLLTDRLLTAT) the chain is Extracellular. Residues 435-455 (IAWPFPAIVHVGIILSTLGAA) form a helical membrane-spanning segment. The Cytoplasmic portion of the chain corresponds to 456 to 490 (LQSLTGAPRLLAAIANDDILPILNYFKVADTSEPH). The chain crosses the membrane as a helical span at residues 491 to 511 (IATLFTAFICIGCVVIGNLDL). Residues 512 to 515 (ITPT) are Extracellular-facing. Residues 516 to 536 (VTMFYLLCYSGVNLSCFLLDL) form a helical membrane-spanning segment. Over 537–544 (LDAPSWRP) the chain is Cytoplasmic. Residues 545 to 565 (RWKYHHWSLSFVGASLCIVIM) form a helical membrane-spanning segment. The Extracellular portion of the chain corresponds to 566-571 (FLISWS). A helical membrane pass occupies residues 572 to 592 (FTVVAIALASLIYKYVGLKGK). Topologically, residues 593 to 975 (AGDWGDGFKS…YHRDVVTLFT (383 aa)) are cytoplasmic.

It belongs to the SLC12A transporter family. In terms of tissue distribution, expressed in young seedlings cotyledon tips, plant vasculature, root tips and axillary buds. Expressed in root vascular strand in the pericycle and other parenchyma cells bordering xylem vessels. Expressed in the xylem/symplast boundaries of rosette stems, rosette leaves and cauline leaves. Expressed in stipules, trichomes and hydathodes. Expressed in pollen grains.

The protein resides in the membrane. Cation/chloride cotransporter that mediates potassium-chloride and sodium-chloride cotransports. Involved in plant development and Cl(-) homeostasis. May be involved in long distance Cl(-) transport. Does not function as an H(+)-dependent cotransporter. This Arabidopsis thaliana (Mouse-ear cress) protein is Cation-chloride cotransporter 1 (CCC1).